Here is a 227-residue protein sequence, read N- to C-terminus: Phosphoglycolate phosphatase (227 aa).

Catalysis depends on aspartate 9, which acts as the Nucleophile. Aspartate 9, aspartate 11, and aspartate 171 together coordinate Mg(2+).

This sequence belongs to the HAD-like hydrolase superfamily. CbbY/CbbZ/Gph/YieH family. Mg(2+) is required as a cofactor.

It catalyses the reaction 2-phosphoglycolate + H2O = glycolate + phosphate. The protein operates within organic acid metabolism; glycolate biosynthesis; glycolate from 2-phosphoglycolate: step 1/1. Specifically catalyzes the dephosphorylation of 2-phosphoglycolate. Is involved in the dissimilation of the intracellular 2-phosphoglycolate formed during the DNA repair of 3'-phosphoglycolate ends, a major class of DNA lesions induced by oxidative stress. This Mesorhizobium japonicum (strain LMG 29417 / CECT 9101 / MAFF 303099) (Mesorhizobium loti (strain MAFF 303099)) protein is Phosphoglycolate phosphatase.